The sequence spans 342 residues: GTPase Obg (342 aa).

An Obg domain is found at 1–159 (MQFIDQAKIE…KQLRLELKLL (159 aa)). Residues 160–330 (AEVGIIGLPN…MLQEIWGILD (171 aa)) form the OBG-type G domain. GTP is bound by residues 166–173 (GLPNAGKS), 191–195 (FTTLI), 213–216 (DIPG), 280–283 (NKID), and 311–313 (SAV). Mg(2+) is bound by residues serine 173 and threonine 193.

This sequence belongs to the TRAFAC class OBG-HflX-like GTPase superfamily. OBG GTPase family. As to quaternary structure, monomer. It depends on Mg(2+) as a cofactor.

The protein resides in the cytoplasm. An essential GTPase which binds GTP, GDP and possibly (p)ppGpp with moderate affinity, with high nucleotide exchange rates and a fairly low GTP hydrolysis rate. Plays a role in control of the cell cycle, stress response, ribosome biogenesis and in those bacteria that undergo differentiation, in morphogenesis control. The chain is GTPase Obg from Nostoc punctiforme (strain ATCC 29133 / PCC 73102).